An 87-amino-acid chain; its full sequence is DNA-directed RNA polymerase subunit omega (87 aa).

The protein belongs to the RNA polymerase subunit omega family. As to quaternary structure, the RNAP catalytic core consists of 2 alpha, 1 beta, 1 beta' and 1 omega subunit. When a sigma factor is associated with the core the holoenzyme is formed, which can initiate transcription.

It catalyses the reaction RNA(n) + a ribonucleoside 5'-triphosphate = RNA(n+1) + diphosphate. Promotes RNA polymerase assembly. Latches the N- and C-terminal regions of the beta' subunit thereby facilitating its interaction with the beta and alpha subunits. The chain is DNA-directed RNA polymerase subunit omega from Acidothermus cellulolyticus (strain ATCC 43068 / DSM 8971 / 11B).